A 107-amino-acid polypeptide reads, in one-letter code: MILQRLFRFSVIRSAVSVYLRRNIGVTAVAFNKELDPIQKLFVDKIREYKSKRQTSGGPVDAGPEYQQELEKELFKLKQMFGNADMNTFPAFKFEDPKFEVIEKPQA.

The transit peptide at 1–31 (MILQRLFRFSVIRSAVSVYLRRNIGVTAVAF) directs the protein to the mitochondrion. N6-acetyllysine occurs at positions 40, 45, and 78. N6-acetyllysine; alternate is present on residues lysine 93 and lysine 98. N6-succinyllysine; alternate is present on residues lysine 93 and lysine 98. Lysine 104 bears the N6-acetyllysine mark.

Belongs to the eukaryotic ATPase subunit F6 family. As to quaternary structure, component of the ATP synthase complex composed at least of ATP5F1A/subunit alpha, ATP5F1B/subunit beta, ATP5MC1/subunit c (homooctomer), MT-ATP6/subunit a, MT-ATP8/subunit 8, ATP5ME/subunit e, ATP5MF/subunit f, ATP5MG/subunit g, ATP5MK/subunit k, ATP5MJ/subunit j, ATP5F1C/subunit gamma, ATP5F1D/subunit delta, ATP5F1E/subunit epsilon, ATP5PF/subunit F6, ATP5PB/subunit b, ATP5PD/subunit d, ATP5PO/subunit OSCP. ATP synthase complex consists of a soluble F(1) head domain (subunits alpha(3) and beta(3)) - the catalytic core - and a membrane F(0) domain - the membrane proton channel (subunits c, a, 8, e, f, g, k and j). These two domains are linked by a central stalk (subunits gamma, delta, and epsilon) rotating inside the F1 region and a stationary peripheral stalk (subunits F6, b, d, and OSCP).

It localises to the mitochondrion. The protein resides in the mitochondrion inner membrane. Its function is as follows. Subunit F6, of the mitochondrial membrane ATP synthase complex (F(1)F(0) ATP synthase or Complex V) that produces ATP from ADP in the presence of a proton gradient across the membrane which is generated by electron transport complexes of the respiratory chain. ATP synthase complex consist of a soluble F(1) head domain - the catalytic core - and a membrane F(1) domain - the membrane proton channel. These two domains are linked by a central stalk rotating inside the F(1) region and a stationary peripheral stalk. During catalysis, ATP synthesis in the catalytic domain of F(1) is coupled via a rotary mechanism of the central stalk subunits to proton translocation. In vivo, can only synthesize ATP although its ATP hydrolase activity can be activated artificially in vitro. Part of the complex F(0) domain. Part of the complex F(0) domain and the peripheric stalk, which acts as a stator to hold the catalytic alpha(3)beta(3) subcomplex and subunit a/ATP6 static relative to the rotary elements. The protein is ATP synthase peripheral stalk subunit F6, mitochondrial of Pongo abelii (Sumatran orangutan).